The chain runs to 864 residues: Leucine--tRNA ligase (864 aa).

Positions 42–52 (PYPSGKLHMGH) match the 'HIGH' region motif. Residues 624-628 (KMSKS) carry the 'KMSKS' region motif. Lys627 is a binding site for ATP.

The protein belongs to the class-I aminoacyl-tRNA synthetase family.

It is found in the cytoplasm. It catalyses the reaction tRNA(Leu) + L-leucine + ATP = L-leucyl-tRNA(Leu) + AMP + diphosphate. The protein is Leucine--tRNA ligase of Burkholderia thailandensis (strain ATCC 700388 / DSM 13276 / CCUG 48851 / CIP 106301 / E264).